The following is a 146-amino-acid chain: Large ribosomal subunit protein uL15 (146 aa).

Basic and acidic residues predominate over residues M1 to R13. The disordered stretch occupies residues M1–Q54. A compositionally biased stretch (gly residues) spans T23–Q35.

Belongs to the universal ribosomal protein uL15 family. As to quaternary structure, part of the 50S ribosomal subunit.

Functionally, binds to the 23S rRNA. This is Large ribosomal subunit protein uL15 from Lactobacillus gasseri (strain ATCC 33323 / DSM 20243 / BCRC 14619 / CIP 102991 / JCM 1131 / KCTC 3163 / NCIMB 11718 / NCTC 13722 / AM63).